The following is a 407-amino-acid chain: Putative serine/threonine-protein kinase C01C4.3 (407 aa).

Polar residues predominate over residues 33–57 (NQLQNHPPRNATQSPQRQPRTSESS). The interval 33-68 (NQLQNHPPRNATQSPQRQPRTSESSMDFPRSALRRN) is disordered. Positions 126 to 397 (YTVNKQLGTG…RKCLAKEKLL (272 aa)) constitute a Protein kinase domain. Residues 132 to 140 (LGTGRFGFI) and lysine 155 each bind ATP. Asparagine 251 acts as the Proton acceptor in catalysis.

Belongs to the protein kinase superfamily. Ser/Thr protein kinase family.

The catalysed reaction is L-seryl-[protein] + ATP = O-phospho-L-seryl-[protein] + ADP + H(+). It catalyses the reaction L-threonyl-[protein] + ATP = O-phospho-L-threonyl-[protein] + ADP + H(+). In Caenorhabditis elegans, this protein is Putative serine/threonine-protein kinase C01C4.3.